We begin with the raw amino-acid sequence, 101 residues long: Putative pterin-4-alpha-carbinolamine dehydratase (101 aa).

The protein belongs to the pterin-4-alpha-carbinolamine dehydratase family.

It carries out the reaction (4aS,6R)-4a-hydroxy-L-erythro-5,6,7,8-tetrahydrobiopterin = (6R)-L-erythro-6,7-dihydrobiopterin + H2O. The sequence is that of Putative pterin-4-alpha-carbinolamine dehydratase from Rhizobium leguminosarum bv. trifolii (strain WSM2304).